The primary structure comprises 423 residues: Transcription factor bHLH14 (423 aa).

The segment at 192 to 243 is disordered; the sequence is GKTTKHTNQTGSYPKPAVSDHSKSGNQQFGSERKRRRKLETTRVAAATKEKH. Positions 245–294 constitute a bHLH domain; the sequence is PAVLSHVEAEKQRREKLNHRFYALRAIVPKVSRMDKASLLSDAVSYIESL. Residues 312–343 form a disordered region; the sequence is ETDKLDNSSSNTSPSSVEYQVNQKPSKSNRGS. Low complexity predominate over residues 318 to 327; sequence NSSSNTSPSS. Positions 328 to 342 are enriched in polar residues; it reads VEYQVNQKPSKSNRG.

In terms of assembly, homodimer.

Its subcellular location is the nucleus. This chain is Transcription factor bHLH14 (BHLH14), found in Arabidopsis thaliana (Mouse-ear cress).